The sequence spans 92 residues: Small ribosomal subunit protein uS19 (92 aa).

The protein belongs to the universal ribosomal protein uS19 family.

Functionally, protein S19 forms a complex with S13 that binds strongly to the 16S ribosomal RNA. This is Small ribosomal subunit protein uS19 from Polaromonas naphthalenivorans (strain CJ2).